A 428-amino-acid polypeptide reads, in one-letter code: Enolase (428 aa).

A (2R)-2-phosphoglycerate-binding site is contributed by Gln164. Residue Glu208 is the Proton donor of the active site. Residues Asp245, Glu286, and Asp313 each coordinate Mg(2+). (2R)-2-phosphoglycerate contacts are provided by Lys338, Arg367, Ser368, and Lys389. Lys338 acts as the Proton acceptor in catalysis.

The protein belongs to the enolase family. Mg(2+) is required as a cofactor.

The protein localises to the cytoplasm. Its subcellular location is the secreted. It localises to the cell surface. It carries out the reaction (2R)-2-phosphoglycerate = phosphoenolpyruvate + H2O. It participates in carbohydrate degradation; glycolysis; pyruvate from D-glyceraldehyde 3-phosphate: step 4/5. In terms of biological role, catalyzes the reversible conversion of 2-phosphoglycerate (2-PG) into phosphoenolpyruvate (PEP). It is essential for the degradation of carbohydrates via glycolysis. The chain is Enolase from Pyrococcus abyssi (strain GE5 / Orsay).